Reading from the N-terminus, the 571-residue chain is Medium/long-chain-fatty-acid--CoA ligase FadD8 (571 aa).

Residues 1–22 form a disordered region; that stretch reads MSTAGDDAVGVPPACGGRSDAV.

This sequence belongs to the ATP-dependent AMP-binding enzyme family.

The catalysed reaction is a medium-chain fatty acid + ATP + CoA = a medium-chain fatty acyl-CoA + AMP + diphosphate. It catalyses the reaction a long-chain fatty acid + ATP + CoA = a long-chain fatty acyl-CoA + AMP + diphosphate. The enzyme catalyses hexanoate + ATP + CoA = hexanoyl-CoA + AMP + diphosphate. It carries out the reaction dodecanoate + ATP + CoA = dodecanoyl-CoA + AMP + diphosphate. The catalysed reaction is hexadecanoate + ATP + CoA = hexadecanoyl-CoA + AMP + diphosphate. It participates in lipid metabolism; fatty acid metabolism. Functionally, catalyzes the activation of medium/long-chain fatty acids as acyl-coenzyme A (acyl-CoA). This Mycobacterium tuberculosis (strain ATCC 25618 / H37Rv) protein is Medium/long-chain-fatty-acid--CoA ligase FadD8.